Consider the following 355-residue polypeptide: UDP-3-O-acylglucosamine N-acyltransferase (355 aa).

The active-site Proton acceptor is histidine 252.

This sequence belongs to the transferase hexapeptide repeat family. LpxD subfamily. In terms of assembly, homotrimer.

It catalyses the reaction a UDP-3-O-[(3R)-3-hydroxyacyl]-alpha-D-glucosamine + a (3R)-hydroxyacyl-[ACP] = a UDP-2-N,3-O-bis[(3R)-3-hydroxyacyl]-alpha-D-glucosamine + holo-[ACP] + H(+). The protein operates within bacterial outer membrane biogenesis; LPS lipid A biosynthesis. Functionally, catalyzes the N-acylation of UDP-3-O-acylglucosamine using 3-hydroxyacyl-ACP as the acyl donor. Is involved in the biosynthesis of lipid A, a phosphorylated glycolipid that anchors the lipopolysaccharide to the outer membrane of the cell. The chain is UDP-3-O-acylglucosamine N-acyltransferase from Polynucleobacter asymbioticus (strain DSM 18221 / CIP 109841 / QLW-P1DMWA-1) (Polynucleobacter necessarius subsp. asymbioticus).